A 142-amino-acid chain; its full sequence is MSLTKTERTIIVSMWAKISTQADTIGTETLERLFLSHPQTKTYFPHFDLHPGSAQLRAHGSKVVAAVGDAVKSIDDIGGALSKLSELHAYILRVDPVNFKLLSHCLLVTLAARFPADFTAEAHAAWDKFLSVVSSVLTEKYR.

N-acetylserine is present on S2. The region spanning 2–142 is the Globin domain; the sequence is SLTKTERTII…VSSVLTEKYR (141 aa). The residue at position 29 (T29) is a Phosphothreonine. S53 bears the Phosphoserine mark. H59 provides a ligand contact to heme b. A phosphoserine mark is found at S73 and S82. Position 88 (H88) interacts with heme b.

Belongs to the globin family. As to quaternary structure, heterotetramer of two zeta chains and two epsilon chains in early embryonic hemoglobin Gower-1; two zeta chains and two gamma chains in fetal hemoglobin Portland-1. Heterotetramer of two zeta chains and two beta chains in hemoglobin Portland-2, detected in fetuses and neonates with homozygous alpha-thalassemia. Detected in fetal erythrocytes (at protein level).

Its function is as follows. The zeta chain is an alpha-type chain of mammalian embryonic hemoglobin. The chain is Hemoglobin subunit zeta (HBZ) from Homo sapiens (Human).